A 1135-amino-acid chain; its full sequence is uncharacterized protein (1135 aa).

The first 28 residues, 1–28 (MALFPRGILIALVLSFVLNLGLVTKIHA), serve as a signal peptide directing secretion. 7 helical membrane-spanning segments follow: residues 332-352 (IVTA…LLAG), 359-379 (EYIN…GINI), 393-413 (MIQW…NWVM), 495-515 (MLVS…AFMV), 522-542 (MISI…FLFA), 555-575 (MISF…MFAV), and 700-720 (IKNI…MYNF).

This sequence belongs to the TrbL/VirB6 family.

The protein resides in the cell membrane. This is an uncharacterized protein from Rickettsia typhi (strain ATCC VR-144 / Wilmington).